The sequence spans 89 residues: Alpha-ketoglutarate dehydrogenase subunit 4, mitochondrial (89 aa).

Belongs to the alpha-ketoglutarate dehydrogenase component 4 family. In terms of assembly, component of the 2-oxoglutarate dehydrogenase complex (OGDC), also called alpha-ketoglutarate dehydrogenase (KGDH) complex. The copmplex is composed of the catalytic subunits OGDH (2-oxoglutarate dehydrogenase kgd1; also called E1 subunit), DLST (dihydrolipoamide succinyltransferase kgd2; also called E2 subunit) and DLD (dihydrolipoamide dehydrogenase dld1; also called E3 subunit), and the assembly factor KGD4. Within OGDC, interacts (via N-terminus) with E3 subunit and (via C-terminus) with the complex core formed by E1 and E2 subunits.

The protein localises to the mitochondrion. Molecular adapter that is necessary to a form a stable 2-oxoglutarate dehydrogenase enzyme complex (OGDC). Required for incorporation of the E3 subunit (dld1) into the E1-E2 core (kgd1-kgd2) of mitochondrial OGDC, and acting as a stability factor for the fully assembled complex. This is Alpha-ketoglutarate dehydrogenase subunit 4, mitochondrial (kgd4) from Schizosaccharomyces pombe (strain 972 / ATCC 24843) (Fission yeast).